Here is a 509-residue protein sequence, read N- to C-terminus: Maturase K (509 aa).

The protein belongs to the intron maturase 2 family. MatK subfamily.

It localises to the plastid. The protein localises to the chloroplast. Its function is as follows. Usually encoded in the trnK tRNA gene intron. Probably assists in splicing its own and other chloroplast group II introns. This Nymphaea odorata (White water lily) protein is Maturase K.